The sequence spans 1141 residues: DNA polymerase II large subunit (1141 aa).

Residues 567–587 form a disordered region; it reads AGTRVGGRMGRPGKSAPRKMK.

Belongs to the archaeal DNA polymerase II family. Heterodimer of a large subunit and a small subunit.

It catalyses the reaction DNA(n) + a 2'-deoxyribonucleoside 5'-triphosphate = DNA(n+1) + diphosphate. It carries out the reaction Exonucleolytic cleavage in the 3'- to 5'-direction to yield nucleoside 5'-phosphates.. Possesses two activities: a DNA synthesis (polymerase) and an exonucleolytic activity that degrades single-stranded DNA in the 3'- to 5'-direction. Has a template-primer preference which is characteristic of a replicative DNA polymerase. The polypeptide is DNA polymerase II large subunit (Methanocorpusculum labreanum (strain ATCC 43576 / DSM 4855 / Z)).